We begin with the raw amino-acid sequence, 287 residues long: Pol-RFamide neuropeptides (287 aa).

The signal sequence occupies residues 1–21; the sequence is MNLITLLVLGVSTCLIYGIEA. A propeptide spanning residues 22–52 is cleaved from the precursor; it reads DEKTSSALENEIVEILNGNFKNEKKSIETSD. At glutamine 53 the chain carries Pyrrolidone carboxylic acid. Position 59 is a phenylalanine amide (phenylalanine 59). The propeptide occupies 62 to 64; the sequence is EVN. Glutamine 65 is modified (pyrrolidone carboxylic acid). Position 71 is a phenylalanine amide (phenylalanine 71). A propeptide spanning residues 74–77 is cleaved from the precursor; the sequence is ELSD. Glutamine 78 is subject to Pyrrolidone carboxylic acid. Phenylalanine 84 is modified (phenylalanine amide). Positions 87-90 are excised as a propeptide; the sequence is ELSD. Glutamine 91 is modified (pyrrolidone carboxylic acid). A Phenylalanine amide modification is found at phenylalanine 97. A propeptide spanning residues 100-103 is cleaved from the precursor; sequence EVLD. Glutamine 104 bears the Pyrrolidone carboxylic acid mark. Residue phenylalanine 110 is modified to Phenylalanine amide. The propeptide occupies 113–116; it reads DASN. A Pyrrolidone carboxylic acid modification is found at glutamine 117. Phenylalanine 123 is subject to Phenylalanine amide. Residues 126-129 constitute a propeptide that is removed on maturation; it reads ELSD. Residue glutamine 130 is modified to Pyrrolidone carboxylic acid. A Phenylalanine amide modification is found at phenylalanine 136. Positions 139–142 are excised as a propeptide; sequence EGSN. Glutamine 143 is subject to Pyrrolidone carboxylic acid. Residue phenylalanine 149 is modified to Phenylalanine amide. Positions 152-168 are excised as a propeptide; the sequence is EASKNDLEKQNGRGDSD. Glutamine 169 bears the Pyrrolidone carboxylic acid mark. Residue phenylalanine 175 is modified to Phenylalanine amide. The propeptide occupies 178-181; it reads EARK. At glutamine 182 the chain carries Pyrrolidone carboxylic acid. Position 188 is a phenylalanine amide (phenylalanine 188). Residues 192-194 constitute a propeptide that is removed on maturation; the sequence is DMN. Glutamine 195 is modified (pyrrolidone carboxylic acid). Histidine 201 bears the Histidine amide mark. The propeptide occupies 204–207; it reads ETSD. At glutamine 208 the chain carries Pyrrolidone carboxylic acid. Phenylalanine 214 carries the phenylalanine amide modification. The propeptide occupies 217–220; it reads QLSD. Glutamine 221 is subject to Pyrrolidone carboxylic acid. A Phenylalanine amide modification is found at phenylalanine 227. A disordered region spans residues 229–267; the sequence is REVKNDKNNPFRSRYTGDSTQLQRENNQPIEELRDNTEK. The propeptide occupies 230 to 287; sequence EVKNDKNNPFRSRYTGDSTQLQRENNQPIEELRDNTEKVSIENKPIMKKTSVKISKTV. The span at 238–257 shows a compositional bias: polar residues; the sequence is PFRSRYTGDSTQLQRENNQP.

This sequence belongs to the FARP (FMRFamide related peptide) family. Post-translationally, the N-terminal processing sites of the Pol-RFamide peptides are acidic suggesting that cniderian nervous systems may use a variety of unconventional processing procedures.

Its subcellular location is the secreted. Has direct action on motoneurons, and effect includes transient inhibition followed by prolonged excitation. The protein is Pol-RFamide neuropeptides of Polyorchis penicillatus (Hydromedusa).